The primary structure comprises 344 residues: F-box protein HRT3 (344 aa).

Residues 14–47 (AIAIWEKGVLKEKDGSMSDAINFYRSALKIHDNV) form a TPR repeat. In terms of domain architecture, F-box spans 98 to 148 (WILEILPDDILLRIIKKVILMSGESWVNLSMTCSTFSKLCFHDSVPFKTFA).

In terms of assembly, interacts with SKP1. Component of the probable SCF(HRT3) complex containing CDC53, SKP1, RBX1 and HRT3.

The protein operates within protein modification; protein ubiquitination. Its function is as follows. Substrate recognition component of a SCF (SKP1-CUL1-F-box protein) E3 ubiquitin-protein ligase complex which mediates the ubiquitination and subsequent proteasomal degradation of target proteins. Probably recognizes and binds to phosphorylated target proteins. The chain is F-box protein HRT3 (HRT3) from Saccharomyces cerevisiae (strain ATCC 204508 / S288c) (Baker's yeast).